A 418-amino-acid chain; its full sequence is (+)-T-muurolol synthase ((2E,6E)-farnesyl diphosphate cyclizing) (418 aa).

The Mg(2+) site is built by Asp-83 and Asp-88. The DDXXXD motif motif lies at 83–88 (DDEYCD). Arg-179 contacts substrate. Mg(2+) is bound by residues Asn-225 and Ser-229. Position 232 (Lys-232) interacts with substrate. Position 233 (Glu-233) interacts with Mg(2+). 312–313 (RY) is a binding site for substrate. The interval 354 to 418 (LPEPGSDGAD…QQSTWRREHR (65 aa)) is disordered. The segment covering 402–412 (ASRSSGLQQST) has biased composition (polar residues).

It belongs to the terpene synthase family. Mg(2+) is required as a cofactor.

The catalysed reaction is (2E,6E)-farnesyl diphosphate + H2O = (+)-T-muurolol + diphosphate. It functions in the pathway secondary metabolite biosynthesis; terpenoid biosynthesis. Its function is as follows. Catalyzes the conversion of (2E,6E)-farnesyl diphosphate (FPP) into (+)-T-muurolol via a 1,10-cyclization, which requires isomerization of FPP to nerolidyl diphosphate (NPP) and then abstraction of the pyrophosphate from intermediate NPP leading to a (E,Z)-germacradienyl (helminthogermacradienyl) cation. The protein is (+)-T-muurolol synthase ((2E,6E)-farnesyl diphosphate cyclizing) of Streptomyces clavuligerus.